Here is a 454-residue protein sequence, read N- to C-terminus: Cobyrinate a,c-diamide synthase (454 aa).

The GATase cobBQ-type domain maps to 247 to 442 (KIGIAMDSAF…IHAHWASNPN (196 aa)). The active-site Nucleophile is Cys329.

This sequence belongs to the CobB/CbiA family. It depends on Mg(2+) as a cofactor.

The enzyme catalyses cob(II)yrinate + 2 L-glutamine + 2 ATP + 2 H2O = cob(II)yrinate a,c diamide + 2 L-glutamate + 2 ADP + 2 phosphate + 2 H(+). Its pathway is cofactor biosynthesis; adenosylcobalamin biosynthesis; cob(II)yrinate a,c-diamide from sirohydrochlorin (anaerobic route): step 10/10. Catalyzes the ATP-dependent amidation of the two carboxylate groups at positions a and c of cobyrinate, using either L-glutamine or ammonia as the nitrogen source. The polypeptide is Cobyrinate a,c-diamide synthase (Leptospira interrogans serogroup Icterohaemorrhagiae serovar Lai (strain 56601)).